Reading from the N-terminus, the 569-residue chain is Adenine deaminase (569 aa).

The protein belongs to the metallo-dependent hydrolases superfamily. Adenine deaminase family. It depends on Mn(2+) as a cofactor.

The catalysed reaction is adenine + H2O + H(+) = hypoxanthine + NH4(+). This Desulfitobacterium hafniense (strain Y51) protein is Adenine deaminase.